Consider the following 431-residue polypeptide: Phosphoribosylamine--glycine ligase (431 aa).

Residues 107–315 (RWLMEEYKIP…LVEIGEEIVD (209 aa)) enclose the ATP-grasp domain. 134 to 193 (IDDFGRPVVVKPLGLTGGKGVKVVGYQLKDNEEAKAYAEELIKRDGKVLIEERTDGVEFT) is a binding site for ATP. Glutamine 273, glutamate 285, and asparagine 287 together coordinate Mg(2+). Mn(2+) is bound by residues glutamine 273, glutamate 285, and asparagine 287.

This sequence belongs to the GARS family. Mg(2+) serves as cofactor. Mn(2+) is required as a cofactor.

The enzyme catalyses 5-phospho-beta-D-ribosylamine + glycine + ATP = N(1)-(5-phospho-beta-D-ribosyl)glycinamide + ADP + phosphate + H(+). The protein operates within purine metabolism; IMP biosynthesis via de novo pathway; N(1)-(5-phospho-D-ribosyl)glycinamide from 5-phospho-alpha-D-ribose 1-diphosphate: step 2/2. In Thermococcus kodakarensis (strain ATCC BAA-918 / JCM 12380 / KOD1) (Pyrococcus kodakaraensis (strain KOD1)), this protein is Phosphoribosylamine--glycine ligase.